Reading from the N-terminus, the 329-residue chain is Protein STRICTOSIDINE SYNTHASE-LIKE 11 (329 aa).

The first 23 residues, 1-23 (MMRSFVSLISLLLLLSFSSSVLS), serve as a signal peptide directing secretion. Residues Asn-37 and Asn-79 are each glycosylated (N-linked (GlcNAc...) asparagine).

Belongs to the strictosidine synthase family.

It is found in the vacuole. The catalysed reaction is 3alpha(S)-strictosidine + H2O = secologanin + tryptamine. It participates in alkaloid biosynthesis; 3alpha(S)-strictosidine biosynthesis; 3alpha(S)-strictosidine from secologanin and tryptamine: step 1/1. Catalyzes the stereospecific condensation of tryptamine with secologanin to form strictosidine, the key intermediate of indole alkaloid biosynthesis. The sequence is that of Protein STRICTOSIDINE SYNTHASE-LIKE 11 from Arabidopsis thaliana (Mouse-ear cress).